The primary structure comprises 351 residues: DNA polymerase IV (351 aa).

Residues 4 to 184 enclose the UmuC domain; sequence FIHIDMDCFY…LPLGKIPGVG (181 aa). D8 and D102 together coordinate Mg(2+). Residue E103 is part of the active site.

The protein belongs to the DNA polymerase type-Y family. Monomer. Mg(2+) serves as cofactor.

It localises to the cytoplasm. It catalyses the reaction DNA(n) + a 2'-deoxyribonucleoside 5'-triphosphate = DNA(n+1) + diphosphate. Functionally, poorly processive, error-prone DNA polymerase involved in untargeted mutagenesis. Copies undamaged DNA at stalled replication forks, which arise in vivo from mismatched or misaligned primer ends. These misaligned primers can be extended by PolIV. Exhibits no 3'-5' exonuclease (proofreading) activity. May be involved in translesional synthesis, in conjunction with the beta clamp from PolIII. This chain is DNA polymerase IV, found in Pseudoalteromonas translucida (strain TAC 125).